The primary structure comprises 95 residues: Co-chaperonin GroES (95 aa).

It belongs to the GroES chaperonin family. In terms of assembly, heptamer of 7 subunits arranged in a ring. Interacts with the chaperonin GroEL.

The protein resides in the cytoplasm. Functionally, together with the chaperonin GroEL, plays an essential role in assisting protein folding. The GroEL-GroES system forms a nano-cage that allows encapsulation of the non-native substrate proteins and provides a physical environment optimized to promote and accelerate protein folding. GroES binds to the apical surface of the GroEL ring, thereby capping the opening of the GroEL channel. This Zymomonas mobilis subsp. mobilis (strain ATCC 31821 / ZM4 / CP4) protein is Co-chaperonin GroES.